Consider the following 173-residue polypeptide: Thaumatin-like protein PWIR2 (173 aa).

Residues 1–20 (MATSPVLFLLLAVFAAGASA) form the signal peptide.

Belongs to the thaumatin family.

The protein is Thaumatin-like protein PWIR2 of Triticum aestivum (Wheat).